Consider the following 157-residue polypeptide: SsrA-binding protein (157 aa).

The protein belongs to the SmpB family.

The protein localises to the cytoplasm. Its function is as follows. Required for rescue of stalled ribosomes mediated by trans-translation. Binds to transfer-messenger RNA (tmRNA), required for stable association of tmRNA with ribosomes. tmRNA and SmpB together mimic tRNA shape, replacing the anticodon stem-loop with SmpB. tmRNA is encoded by the ssrA gene; the 2 termini fold to resemble tRNA(Ala) and it encodes a 'tag peptide', a short internal open reading frame. During trans-translation Ala-aminoacylated tmRNA acts like a tRNA, entering the A-site of stalled ribosomes, displacing the stalled mRNA. The ribosome then switches to translate the ORF on the tmRNA; the nascent peptide is terminated with the 'tag peptide' encoded by the tmRNA and targeted for degradation. The ribosome is freed to recommence translation, which seems to be the essential function of trans-translation. The protein is SsrA-binding protein of Chlorobium phaeovibrioides (strain DSM 265 / 1930) (Prosthecochloris vibrioformis (strain DSM 265)).